The primary structure comprises 1259 residues: Autism susceptibility gene 2 protein (1259 aa).

5 disordered regions span residues Met1–Ile87, Leu108–Cys285, Cys299–Pro470, Pro771–Gly1027, and Arg1119–Gly1146. The segment covering His8 to Arg17 has biased composition (basic residues). Residues Gly28–Gly41 are compositionally biased toward gly residues. Basic and acidic residues predominate over residues Leu108–Gln118. Positions His136 to His147 are enriched in basic residues. Residues Tyr148–Leu158 show a composition bias toward basic and acidic residues. The segment covering Pro177–Gly192 has biased composition (polar residues). Positions Arg276 to Cys285 are enriched in basic and acidic residues. The interval Ile289–Leu472 is important for regulation of lamellipodia formation. Pro residues-rich tracts occupy residues Pro331–Pro345 and Ala353–Gln365. Positions Ser386–Ser410 are enriched in low complexity. Residues Pro436–Thr447 show a composition bias toward polar residues. Residues Pro801–Leu810 show a composition bias toward pro residues. Basic and acidic residues-rich tracts occupy residues Gly813 to Arg850, Ile876 to Gln935, and Arg960 to Pro993. Over residues Ser1125 to Pro1134 the composition is skewed to basic residues. 2 positions are modified to phosphoserine: Ser1198 and Ser1233. Positions Leu1217–Arg1259 are disordered. Positions Glu1243–Arg1259 are enriched in basic and acidic residues.

The protein belongs to the AUTS2 family. As to quaternary structure, component of a PRC1-like complex that contains PCGF5, RNF2, CSNK2B, RYBP and AUTS2. Within this complex, interacts directly with PCGF5 and CSNK2B. Interacts with the histone acetyltransferase EP300/p300. Interacts (via Pro-rich region) with PREX1, DOCK1 and ELMO2. As to expression, strongly expressed in brain, skeletal muscle and kidney. Also expressed in placenta, lung and leukocytes.

It is found in the nucleus. Its subcellular location is the cytoplasm. The protein localises to the cytoskeleton. The protein resides in the cell projection. It localises to the growth cone. In terms of biological role, component of a Polycomb group (PcG) multiprotein PRC1-like complex, a complex class required to maintain the transcriptionally repressive state of many genes, including Hox genes, throughout development. PcG PRC1 complex acts via chromatin remodeling and modification of histones; it mediates monoubiquitination of histone H2A 'Lys-119', rendering chromatin heritably changed in its expressibility. The PRC1-like complex that contains PCGF5, RNF2, CSNK2B, RYBP and AUTS2 has decreased histone H2A ubiquitination activity, due to the phosphorylation of RNF2 by CSNK2B. As a consequence, the complex mediates transcriptional activation. In the cytoplasm, plays a role in axon and dendrite elongation and in neuronal migration during embryonic brain development. Promotes reorganization of the actin cytoskeleton, lamellipodia formation and neurite elongation via its interaction with RAC guanine nucleotide exchange factors, which then leads to the activation of RAC1. The sequence is that of Autism susceptibility gene 2 protein (AUTS2) from Homo sapiens (Human).